We begin with the raw amino-acid sequence, 705 residues long: tRNA 5-methylaminomethyl-2-thiouridine biosynthesis bifunctional protein MnmC (705 aa).

The interval 1–241 (MTIKTADIQF…KREMLAGIIA (241 aa)) is tRNA (mnm(5)s(2)U34)-methyltransferase. The FAD-dependent cmnm(5)s(2)U34 oxidoreductase stretch occupies residues 289–705 (IGAGIAGASM…LIRQLIRREV (417 aa)).

In the N-terminal section; belongs to the methyltransferase superfamily. tRNA (mnm(5)s(2)U34)-methyltransferase family. The protein in the C-terminal section; belongs to the DAO family. FAD serves as cofactor.

It localises to the cytoplasm. It catalyses the reaction 5-aminomethyl-2-thiouridine(34) in tRNA + S-adenosyl-L-methionine = 5-methylaminomethyl-2-thiouridine(34) in tRNA + S-adenosyl-L-homocysteine + H(+). Functionally, catalyzes the last two steps in the biosynthesis of 5-methylaminomethyl-2-thiouridine (mnm(5)s(2)U) at the wobble position (U34) in tRNA. Catalyzes the FAD-dependent demodification of cmnm(5)s(2)U34 to nm(5)s(2)U34, followed by the transfer of a methyl group from S-adenosyl-L-methionine to nm(5)s(2)U34, to form mnm(5)s(2)U34. This Pseudoalteromonas atlantica (strain T6c / ATCC BAA-1087) protein is tRNA 5-methylaminomethyl-2-thiouridine biosynthesis bifunctional protein MnmC.